The primary structure comprises 506 residues: Transcriptional coactivator YAP1 (506 aa).

Over residues 1-38 (MDPGPPPPAAPPQAQGPPSAPPPPGQAPPSAPGPPAPP) the composition is skewed to pro residues. Residues 1–60 (MDPGPPPPAAPPQAQGPPSAPPPPGQAPPSAPGPPAPPGSQAAPQAPPAGHQIVHVRGDS) are disordered. The span at 39-50 (GSQAAPQAPPAG) shows a compositional bias: low complexity. Ser60 bears the Phosphoserine mark. The residue at position 62 (Thr62) is a Phosphothreonine. Positions 90–112 (LPDSFFKPPEPKAHSRQASTDAG) are disordered. A phosphoserine mark is found at Ser104 and Ser108. A phosphothreonine mark is found at Thr109 and Thr118. Phosphoserine occurs at positions 126, 127, 130, and 137. The interval 132 to 160 (QLGAVSPGTLTPTGVSSGPAAAPSAQHLR) is disordered. Residues 147 to 156 (SSGPAAAPSA) are compositionally biased toward low complexity. The residue at position 163 (Ser163) is a Phosphoserine. 2 WW domains span residues 170-204 (VPLP…PRKA) and 230-263 (PLPD…PRLD). Residues Ser273, Ser288, Ser369, Ser373, Ser384, Ser390, Ser399, Ser402, and Ser405 each carry the phosphoserine modification. Disordered regions lie at residues 274 to 307 (QSAP…MRLQ) and 356 to 416 (TLEQ…RTPD). Over residues 279–289 (KQPPPLAPQSP) the composition is skewed to pro residues. The tract at residues 290 to 506 (PGVLGGGGSS…LDKESFLTWL (217 aa)) is transactivation domain. The segment covering 371–393 (GMSQELRTMTTSGSDPFLNSGTY) has biased composition (polar residues). Residues 401-411 (DSGLSMSSYSV) are compositionally biased toward polar residues. Tyr409 carries the phosphotyrosine modification. Residue Thr414 is modified to Phosphothreonine.

Belongs to the YAP1 family. As to quaternary structure, binds to the SH3 domain of the YES kinase. Binds to WBP1 and WBP2. Binds, in vitro, through the WW1 domain, to neural isoforms of ENAH that contain the PPSY motif. The phosphorylated form interacts with YWHAB. Interacts (via WW domains) with LATS1 (via PPxY motif 2). Interacts with LATS2. Interacts with TEAD1, TEAD2 and TEAD3. Interacts wih TEAD4. Interacts with TP73. Interacts with RUNX1. Interacts with HCK. Interacts (via WW domains) with PTPN14 (via PPxY motif 2); this interaction leads to the cytoplasmic sequestration of YAP1 and inhibits its transcriptional coactivator activity. Interacts (when phosphorylated at Ser-112) with SMAD2, SMAD3 and WWTR1. Interacts with PRRG2 (via cytoplasmic domain). Interacts (via WW domains) with PRRG4 (via cytoplasmic domain). Interacts (phosphorylated) with CLDN18; the interaction sequesters YAP1 away from the nucleus and thereby restricts transcription of YAP1 target genes. Interacts with SMAD1. Interacts with AMOT; the interaction facilitates translocation of YAP1 to the cytoplasm and tight junctions. Interacts with AMOTL2, the interaction is required for ubiquitination of AMOTL2 and localization of YAP1 to tight junctions. Phosphorylated by LATS1 and LATS2; leading to cytoplasmic translocation and inactivation. Phosphorylated by ABL1; leading to YAP1 stabilization, enhanced interaction with TP73 and recruitment onto proapoptotic genes; in response to DNA damage. Phosphorylation at Ser-402 and Ser-405 by CK1 is triggered by previous phosphorylation at Ser-399 by LATS proteins and leads to YAP1 ubiquitination by SCF(beta-TRCP) E3 ubiquitin ligase and subsequent degradation. Phosphorylated at Thr-118, Ser-137, Ser-369 and Thr-414 by MAPK8/JNK1 and MAPK9/JNK2, which is required for the regulation of apoptosis by YAP1. Phosphorylated in the nucleus by PRP4K; phosphorylation leads to nuclear exclusion. Post-translationally, ubiquitinated by SCF(beta-TRCP) E3 ubiquitin ligase.

The protein resides in the cytoplasm. The protein localises to the nucleus. It localises to the cell junction. Its subcellular location is the tight junction. Transcriptional regulator with dual roles as a coactivator and corepressor. Critical downstream regulatory target in the Hippo signaling pathway, crucial for organ size control and tumor suppression by restricting proliferation and promoting apoptosis. The Hippo signaling pathway core involves a kinase cascade featuring STK3/MST2 and STK4/MST1, along with its regulatory partner SAV1, which phosphorylates and activates LATS1/2 in complex with their regulatory protein, MOB1. This activation leads to the phosphorylation and inactivation of the YAP1 oncoprotein and WWTR1/TAZ. Phosphorylation of YAP1 by LATS1/2 prevents its nuclear translocation, thereby regulating the expression of its target genes. The transcriptional regulation of gene expression requires TEAD transcription factors and modulates cell growth, anchorage-independent growth, and induction of epithelial-mesenchymal transition (EMT). Plays a key role in tissue tension and 3D tissue shape by regulating the cortical actomyosin network, acting via ARHGAP18, a Rho GTPase activating protein that suppresses F-actin polymerization. It also suppresses ciliogenesis by acting as a transcriptional corepressor of TEAD4 target genes AURKA and PLK1. In conjunction with WWTR1, regulates TGFB1-dependent SMAD2 and SMAD3 nuclear accumulation. Synergizes with WBP2 to enhance PGR activity. The chain is Transcriptional coactivator YAP1 (YAP1) from Canis lupus familiaris (Dog).